A 123-amino-acid chain; its full sequence is Defensin beta 118 (123 aa).

Positions 1-19 are cleaved as a signal peptide; it reads MKLLLLALPMLVLLPQVIP. 3 cysteine pairs are disulfide-bonded: Cys27/Cys54, Cys34/Cys48, and Cys38/Cys55. A propeptide spanning residues 65-123 is cleaved from the precursor; that stretch reads VPTTSPTPLSDSTPGIIDDILTVRFTTDYFEVSSKKDMIEESEAGRGTETSLPNVHHSS. Residues 100-110 are compositionally biased toward basic and acidic residues; sequence KDMIEESEAGR. The segment at 100–123 is disordered; that stretch reads KDMIEESEAGRGTETSLPNVHHSS. Residues 112 to 123 are compositionally biased toward polar residues; that stretch reads TETSLPNVHHSS.

The protein belongs to the beta-defensin family. In terms of processing, the three-dimensional structure formed by the three intramolecular disulfide bridges is indispensable for antimicrobial activity.

The protein resides in the secreted. Its function is as follows. Host defense peptide that exhibits antimicrobial activity against both Gram-negative bacteria, such as E.coli and S.typhimurium, and Gram-positive bacteria, such as S.aureus and B.subtilis. Inhibits cell adhesion of E.coli on intestinal epithelial enterocytes. Causes rapid permeabilization of both the outer and inner membrane of E.coli, leading to morphological alterations on the bacterial surface. Binds to bacterial lipopolysaccharides (LPS) with high affinity, and may thereby be involved in immunoregulation through LPS neutralization. May contribute to epididymal innate immunity and protect the sperm against attack by microorganisms. This is Defensin beta 118 (DEFB118) from Gorilla gorilla gorilla (Western lowland gorilla).